Consider the following 376-residue polypeptide: Inactive CLIP domain-containing serine protease A28 (376 aa).

Positions 1–19 are cleaved as a signal peptide; it reads MKVLLFCIVISLTTLIASG. The Clip domain maps to 24-80; the sequence is EELRCPGGYCVSKYLCPNGTFIDDIKHAQTTQLIGLRAGLDIDDFDDCNDYLLVCCQ. Disulfide bonds link Cys-28-Cys-78, Cys-33-Cys-71, and Cys-39-Cys-79. Asn-41 carries N-linked (GlcNAc...) asparagine glycosylation. The disordered stretch occupies residues 85-106; the sequence is PTATSTEKPATSDELIEPPPST. The 251-residue stretch at 114 to 364 folds into the Peptidase S1 domain; it reads NEGGLIYDLR…YVQWLNEHIV (251 aa). 2 N-linked (GlcNAc...) asparagine glycosylation sites follow: Asn-125 and Asn-279. 3 cysteine pairs are disulfide-bonded: Cys-251–Cys-321, Cys-280–Cys-301, and Cys-311–Cys-340. An N-linked (GlcNAc...) asparagine glycan is attached at Asn-369.

This sequence belongs to the peptidase S1 family. CLIP subfamily. May form a heterodimer of a light chain and a heavy chain; disulfide-linked. Post-translationally, secreted as a full-length protein. Proteolytically cleaved into two chains which probably remain covalently linked. Cleavage is induced by fungus B.bassiana and Gram-positive or Gram-negative bacteria infection.

It localises to the secreted. Inactive serine protease which plays an essential role in the innate immune response against bacteria, fungi and protozoa infection by activating the melanization cascade. In the melanization cascade, acts downstream of TEP1, SPCLIP1 and CLIPA8 to promote CLIPC9 proteolytic cleavage. In the susceptible strain G3, appears to be dispensable for parasite P.berghei ookinete elimination which occurs by lysis. Required for the melanization of Gram-positive and Gram-negative bacteria. Required for the melanization of fungus B.bassiana. The chain is Inactive CLIP domain-containing serine protease A28 from Anopheles gambiae (African malaria mosquito).